The sequence spans 319 residues: MATTKPYRVLLYYMYTTIENPEEFAEQHLEFCKSLELKGRILVATEGINGTCSGTVEQTEKYVEAMNNDPRFAGIVFKIDEADEHAFKKMHVRPRSELVTLRLEDDINPKEITGKYLEPKDFYEAMKQEDTVIIDARNDYEFDLGHFKGAIKPDIESFRELPDWIRENKETLEGKKILTYCTGGIRCEKFSGWLVREGYEDVSQLHGGIVTYGKDPEVQGELWDGQCYVFDERIAVPVNQKEHVIVGKDHFTGEPCERYVNCANPECNKKILCSEESEAKHLRACSHECRVHPRNRYIVQHELTEEQVAATLEKIEAGK.

The Rhodanese domain occupies 127–221; the sequence is KQEDTVIIDA…YGKDPEVQGE (95 aa). Cysteine 181 serves as the catalytic Cysteine persulfide intermediate.

It belongs to the TrhO family.

The catalysed reaction is uridine(34) in tRNA + AH2 + O2 = 5-hydroxyuridine(34) in tRNA + A + H2O. Its function is as follows. Catalyzes oxygen-dependent 5-hydroxyuridine (ho5U) modification at position 34 in tRNAs. This Bacillus mycoides (strain KBAB4) (Bacillus weihenstephanensis) protein is tRNA uridine(34) hydroxylase.